We begin with the raw amino-acid sequence, 317 residues long: Transaldolase (317 aa).

The active-site Schiff-base intermediate with substrate is Lys126.

The protein belongs to the transaldolase family. Type 1 subfamily. Homodimer.

It is found in the cytoplasm. It carries out the reaction D-sedoheptulose 7-phosphate + D-glyceraldehyde 3-phosphate = D-erythrose 4-phosphate + beta-D-fructose 6-phosphate. It functions in the pathway carbohydrate degradation; pentose phosphate pathway; D-glyceraldehyde 3-phosphate and beta-D-fructose 6-phosphate from D-ribose 5-phosphate and D-xylulose 5-phosphate (non-oxidative stage): step 2/3. Transaldolase is important for the balance of metabolites in the pentose-phosphate pathway. In Burkholderia multivorans (strain ATCC 17616 / 249), this protein is Transaldolase.